Here is a 464-residue protein sequence, read N- to C-terminus: Glutathione reductase (464 aa).

FAD-binding residues include S17 and G18. Residue S17 coordinates glutathione. Glutathione is bound at residue R24. Positions 37, 45, 46, and 54 each coordinate FAD. C46 and C51 are disulfide-bonded. Y103 lines the glutathione pocket. Position 119 (A119) interacts with FAD. 6 residues coordinate NADP(+): A186, I189, E192, R209, R215, and G274. Residue D315 participates in FAD binding. Residue E321 participates in NADP(+) binding. T323 contacts FAD. A glutathione-binding site is contributed by R331. V354 is an NADP(+) binding site. An FAD-binding site is contributed by H453. The active-site Proton acceptor is H453.

This sequence belongs to the class-I pyridine nucleotide-disulfide oxidoreductase family. Homodimer. Requires FAD as cofactor.

It is found in the cytoplasm. The protein resides in the mitochondrion. The enzyme catalyses 2 glutathione + NADP(+) = glutathione disulfide + NADPH + H(+). Functionally, catalyzes the reduction of glutathione disulfide (GSSG) to reduced glutathione (GSH). Constitutes the major mechanism to maintain a high GSH:GSSG ratio in the cytosol. This chain is Glutathione reductase (pgr1), found in Schizosaccharomyces pombe (strain 972 / ATCC 24843) (Fission yeast).